Reading from the N-terminus, the 297-residue chain is Ribosomal protein L11 methyltransferase (297 aa).

4 residues coordinate S-adenosyl-L-methionine: Thr-152, Gly-173, Asp-195, and Asn-234.

Belongs to the methyltransferase superfamily. PrmA family.

It is found in the cytoplasm. It catalyses the reaction L-lysyl-[protein] + 3 S-adenosyl-L-methionine = N(6),N(6),N(6)-trimethyl-L-lysyl-[protein] + 3 S-adenosyl-L-homocysteine + 3 H(+). Functionally, methylates ribosomal protein L11. This is Ribosomal protein L11 methyltransferase from Cupriavidus pinatubonensis (strain JMP 134 / LMG 1197) (Cupriavidus necator (strain JMP 134)).